The following is a 45-amino-acid chain: Large ribosomal subunit protein bL34 (45 aa).

The protein belongs to the bacterial ribosomal protein bL34 family.

This is Large ribosomal subunit protein bL34 from Leifsonia xyli subsp. xyli (strain CTCB07).